A 197-amino-acid chain; its full sequence is ATP-dependent Clp protease proteolytic subunit 3 (197 aa).

The active-site Nucleophile is S96. H121 is a catalytic residue.

This sequence belongs to the peptidase S14 family. As to quaternary structure, fourteen ClpP subunits assemble into 2 heptameric rings which stack back to back to give a disk-like structure with a central cavity, resembling the structure of eukaryotic proteasomes.

The protein localises to the cytoplasm. It catalyses the reaction Hydrolysis of proteins to small peptides in the presence of ATP and magnesium. alpha-casein is the usual test substrate. In the absence of ATP, only oligopeptides shorter than five residues are hydrolyzed (such as succinyl-Leu-Tyr-|-NHMec, and Leu-Tyr-Leu-|-Tyr-Trp, in which cleavage of the -Tyr-|-Leu- and -Tyr-|-Trp bonds also occurs).. Its function is as follows. Cleaves peptides in various proteins in a process that requires ATP hydrolysis. Has a chymotrypsin-like activity. Plays a major role in the degradation of misfolded proteins. The chain is ATP-dependent Clp protease proteolytic subunit 3 from Prochlorococcus marinus (strain MIT 9313).